We begin with the raw amino-acid sequence, 228 residues long: MTARRAPAVNRDVLEQMLVEGTAALDLTLTDAQRNQLLDYVALLGKWNAVYNLTAIRDPKQMLIQHILDSLSIVPHLRGRTSARVLDVGSGGGLPGIVLAIVEPGWQVTLNDIVQKKSAFQTQMRAELKLVNLSVVTGRVESLQPGVEVPEKFDMIVSRAFADLSDFVKLARHLVAPGGSIWAMKGVHPDDEIARLPEGSHVKQTIRLAVPMLDAERHLFEVAVDDAN.

S-adenosyl-L-methionine-binding positions include Gly89, Leu94, 140-141 (VE), and Arg159.

Belongs to the methyltransferase superfamily. RNA methyltransferase RsmG family.

The protein resides in the cytoplasm. The catalysed reaction is guanosine(527) in 16S rRNA + S-adenosyl-L-methionine = N(7)-methylguanosine(527) in 16S rRNA + S-adenosyl-L-homocysteine. Specifically methylates the N7 position of guanine in position 527 of 16S rRNA. In Burkholderia cenocepacia (strain ATCC BAA-245 / DSM 16553 / LMG 16656 / NCTC 13227 / J2315 / CF5610) (Burkholderia cepacia (strain J2315)), this protein is Ribosomal RNA small subunit methyltransferase G.